The following is a 409-amino-acid chain: MKCNTKCDKNGYFGEFGGQYIPEVLKPAVEELKEAYKELKDDEDFQNELAYYLKHYAGRETPLYYAKNLTEKLGGAKIYLKREDLLHGGAHKTNNTIGQALLAKKMGKTRIIAETGAGQHGVGTSMAGALFGLETEIFMGRVDTERQQPNVARMKLLGAKVTPVDTGSKVLKDAVNEAMRNWTATFENTHYLLGTVMGPHPFPTMVRDFQSVIGKEVKKQIMEQEERLPDYLVACIGGGSNAMGLFHPFLSNNISTGNDDAKNVKMIGIEAAGKGLNTSLHGASITKGEKGVLHGMLSYFLQDEDGQIEEAYSISAGLDYPGIGPEHAYLHNLGRVQYASATDKQALKAFMELTRTEGIIPALESSHAIAYAIENAGNMDKDDIMVINLSGRGDKDLNTVINAVHKLGC.

Lysine 92 carries the post-translational modification N6-(pyridoxal phosphate)lysine.

This sequence belongs to the TrpB family. As to quaternary structure, tetramer of two alpha and two beta chains. Requires pyridoxal 5'-phosphate as cofactor.

The enzyme catalyses (1S,2R)-1-C-(indol-3-yl)glycerol 3-phosphate + L-serine = D-glyceraldehyde 3-phosphate + L-tryptophan + H2O. It participates in amino-acid biosynthesis; L-tryptophan biosynthesis; L-tryptophan from chorismate: step 5/5. Its function is as follows. The beta subunit is responsible for the synthesis of L-tryptophan from indole and L-serine. The sequence is that of Tryptophan synthase beta chain (trpB) from Methanococcus voltae.